The chain runs to 360 residues: UDP-N-acetylglucosamine--N-acetylmuramyl-(pentapeptide) pyrophosphoryl-undecaprenol N-acetylglucosamine transferase (360 aa).

Residues 11 to 13 (TGG), Asn-120, Arg-161, Ser-188, and Gln-282 each bind UDP-N-acetyl-alpha-D-glucosamine.

This sequence belongs to the glycosyltransferase 28 family. MurG subfamily.

Its subcellular location is the cell inner membrane. The catalysed reaction is di-trans,octa-cis-undecaprenyl diphospho-N-acetyl-alpha-D-muramoyl-L-alanyl-D-glutamyl-meso-2,6-diaminopimeloyl-D-alanyl-D-alanine + UDP-N-acetyl-alpha-D-glucosamine = di-trans,octa-cis-undecaprenyl diphospho-[N-acetyl-alpha-D-glucosaminyl-(1-&gt;4)]-N-acetyl-alpha-D-muramoyl-L-alanyl-D-glutamyl-meso-2,6-diaminopimeloyl-D-alanyl-D-alanine + UDP + H(+). The protein operates within cell wall biogenesis; peptidoglycan biosynthesis. Its function is as follows. Cell wall formation. Catalyzes the transfer of a GlcNAc subunit on undecaprenyl-pyrophosphoryl-MurNAc-pentapeptide (lipid intermediate I) to form undecaprenyl-pyrophosphoryl-MurNAc-(pentapeptide)GlcNAc (lipid intermediate II). This is UDP-N-acetylglucosamine--N-acetylmuramyl-(pentapeptide) pyrophosphoryl-undecaprenol N-acetylglucosamine transferase from Synechococcus sp. (strain RCC307).